The chain runs to 282 residues: Heme oxygenase 1, chloroplastic (282 aa).

A chloroplast-targeting transit peptide spans 1–54 (MAYLAPISSSLSIFKNPQLSRFQFSSSSPNPLFLRPRIQILSMTMNKSPSLVVV). Heme b is bound at residue histidine 86.

Belongs to the heme oxygenase family. Widely expressed.

Its subcellular location is the plastid. The protein resides in the chloroplast. The enzyme catalyses heme b + 3 reduced [NADPH--hemoprotein reductase] + 3 O2 = biliverdin IXalpha + CO + Fe(2+) + 3 oxidized [NADPH--hemoprotein reductase] + 3 H2O + H(+). Activated by ascorbate. Its function is as follows. Key enzyme in the synthesis of the chromophore of the phytochrome family of plant photoreceptors. Catalyzes the opening of the heme ring to form the open-chain tetrapyrrole biliverdin IX with the release of iron and carbon monoxide (CO). Produces specifically the biliverdin IX-alpha isomer. Can form complex with heme, is ferredoxin-dependent and its activity is increased in the presence of ascorbate. Plays a role in salt acclimation signaling. May affect the plastid-to-nucleus signaling pathway by perturbing tetrapyrrole synthesis. The plastid-to-nucleus signal plays an important role in the coordinated expression of both nuclear- and chloroplast-localized genes that encode photosynthesis-related proteins. The chain is Heme oxygenase 1, chloroplastic (HO1) from Arabidopsis thaliana (Mouse-ear cress).